We begin with the raw amino-acid sequence, 311 residues long: MRLVFAGTPEFARLALEALLAAGHEIPLVLTQPDRPAGRGLKLTPSPVKEAALAAGIEVAQPRSLRLDGRYPDEALAAQARLVAVAPEVMVVAAYGLILPRWTLALPARGCLNIHASLLPRWRGAAPIQRAIEAGDARTGVTIMQMDDGLDTGDMLLERTVPIGAETTAAVLHDELARVGAEAIVAALADLPALAPRKQPEQGVTYAAKLDKAEAALKLDESAELLARRIRAFNPVPGASLRLPGLNEPVKVWQAEALPESSPAAPGTVLRASAQGVDIATGQGVLRLLELQKAGGKRQSAEVFVRGWQPA.

Position 117 to 120 (117 to 120 (SLLP)) interacts with (6S)-5,6,7,8-tetrahydrofolate.

The protein belongs to the Fmt family.

The enzyme catalyses L-methionyl-tRNA(fMet) + (6R)-10-formyltetrahydrofolate = N-formyl-L-methionyl-tRNA(fMet) + (6S)-5,6,7,8-tetrahydrofolate + H(+). Attaches a formyl group to the free amino group of methionyl-tRNA(fMet). The formyl group appears to play a dual role in the initiator identity of N-formylmethionyl-tRNA by promoting its recognition by IF2 and preventing the misappropriation of this tRNA by the elongation apparatus. The protein is Methionyl-tRNA formyltransferase of Bordetella avium (strain 197N).